Consider the following 384-residue polypeptide: Chorismate synthase (384 aa).

Residues arginine 40 and arginine 46 each coordinate NADP(+). Residues arginine 128–serine 130, glycine 292, lysine 307–threonine 311, and arginine 333 each bind FMN.

This sequence belongs to the chorismate synthase family. Homotetramer. Requires FMNH2 as cofactor.

It catalyses the reaction 5-O-(1-carboxyvinyl)-3-phosphoshikimate = chorismate + phosphate. Its pathway is metabolic intermediate biosynthesis; chorismate biosynthesis; chorismate from D-erythrose 4-phosphate and phosphoenolpyruvate: step 7/7. In terms of biological role, catalyzes the anti-1,4-elimination of the C-3 phosphate and the C-6 proR hydrogen from 5-enolpyruvylshikimate-3-phosphate (EPSP) to yield chorismate, which is the branch point compound that serves as the starting substrate for the three terminal pathways of aromatic amino acid biosynthesis. This reaction introduces a second double bond into the aromatic ring system. The chain is Chorismate synthase from Carboxydothermus hydrogenoformans (strain ATCC BAA-161 / DSM 6008 / Z-2901).